A 187-amino-acid chain; its full sequence is Dihydrofolate reductase (187 aa).

Residues 4–185 (PLNCIVAVSQ…IKYKFEVYEK (182 aa)) form the DHFR domain. NADP(+) contacts are provided by residues Ala10 and 16 to 22 (GIGKNGD). 31–36 (EFKYFQ) lines the substrate pocket. Lys33 is subject to N6-acetyllysine; alternate. The residue at position 33 (Lys33) is an N6-succinyllysine; alternate. 55–57 (RKT) lines the NADP(+) pocket. Arg71 serves as a coordination point for substrate. NADP(+) contacts are provided by residues 77 to 79 (SRE) and 117 to 124 (GGSSVYQE).

This sequence belongs to the dihydrofolate reductase family. Homodimer.

It localises to the mitochondrion. Its subcellular location is the cytoplasm. The enzyme catalyses (6S)-5,6,7,8-tetrahydrofolate + NADP(+) = 7,8-dihydrofolate + NADPH + H(+). It functions in the pathway cofactor biosynthesis; tetrahydrofolate biosynthesis; 5,6,7,8-tetrahydrofolate from 7,8-dihydrofolate: step 1/1. Its function is as follows. Key enzyme in folate metabolism. Contributes to the de novo mitochondrial thymidylate biosynthesis pathway. Catalyzes an essential reaction for de novo glycine and purine synthesis, and for DNA precursor synthesis. Binds its own mRNA. The protein is Dihydrofolate reductase (Dhfr) of Rattus norvegicus (Rat).